We begin with the raw amino-acid sequence, 190 residues long: Protein LZIC (190 aa).

Positions 2–63 (ASRGKTETSK…SEFNDSLKKI (62 aa)) form a coiled coil.

This sequence belongs to the CTNNBIP1 family. Does not interact with CTNNB1.

This chain is Protein LZIC (Lzic), found in Rattus norvegicus (Rat).